Consider the following 382-residue polypeptide: Gap junction alpha-1 protein (382 aa).

Residues 2 to 23 (GDWSALGKLLDKVQAYSTAGGK) are Cytoplasmic-facing. At serine 5 the chain carries Phosphoserine. A helical membrane pass occupies residues 24 to 44 (VWLSVLFIFRILLLGTAVESA). Residues 45–76 (WGDEQSAFRCNTQQPGCENVCYDKSFPISHVR) are Extracellular-facing. 2 disulfides stabilise this stretch: cysteine 54-cysteine 192 and cysteine 187-cysteine 198. Residues 77–97 (FWVLQIIFVSVPTLLYLAHVF) form a helical membrane-spanning segment. Residues 98-155 (YVMRKEEKLNKKEEELKVAQTDGANVDMHLKQIEIKKFKYGIEEHGKVKMRGGLLRTY) are Cytoplasmic-facing. Residue lysine 144 forms a Glycyl lysine isopeptide (Lys-Gly) (interchain with G-Cter in SUMO) linkage. A helical membrane pass occupies residues 156-176 (IISILFKSVFEVAFLLIQWYI). Over 177–207 (YGFSLSAVYTCKRDPCPHQVDCFLSRPTEKT) the chain is Extracellular. The chain crosses the membrane as a helical span at residues 208–228 (IFIIFMLVVSLVSLALNIIEL). At 229–382 (FYVFFKGIKD…SRPRPDDLEI (154 aa)) the chain is on the cytoplasmic side. A Glycyl lysine isopeptide (Lys-Gly) (interchain with G-Cter in SUMO) cross-link involves residue lysine 237. An interaction with NOV region spans residues 244-382 (SDLYHATTGP…SRPRPDDLEI (139 aa)). The residue at position 247 (tyrosine 247) is a Phosphotyrosine. Phosphoserine is present on residues serine 255, serine 257, and serine 262. The tract at residues 264-382 (TYAYFNGCSS…SRPRPDDLEI (119 aa)) is interaction with UBQLN4. The residue at position 271 (cysteine 271) is an S-nitrosocysteine. Threonine 275 carries the phosphothreonine modification. Residues serine 306 and serine 314 each carry the phosphoserine modification. Residues 317-332 (QNRMGQAGSTISNSHA) are compositionally biased toward polar residues. Residues 317 to 382 (QNRMGQAGST…SRPRPDDLEI (66 aa)) are disordered. Position 325 is a phosphoserine; by CK1 (serine 325). A Phosphothreonine modification is found at threonine 326. Residues serine 328 and serine 330 each carry the phosphoserine; by CK1 modification. 2 positions are modified to phosphoserine: serine 344 and serine 365. Low complexity predominate over residues 362-374 (RPSSRASSRASSR). Serine 368 carries the post-translational modification Phosphoserine; by PKC/PRKCG and PKC/PRKCD. Phosphoserine occurs at positions 369 and 373.

This sequence belongs to the connexin family. Alpha-type (group II) subfamily. In terms of assembly, a connexon is composed of a hexamer of connexins. Interacts with SGSM3. Interacts with RIC1/CIP150. Interacts with CNST and CSNK1D. Interacts (via C-terminus) with TJP1. Interacts (via C-terminus) with SRC (via SH3 domain). Interacts (not ubiquitinated) with UBQLN4 (via UBA domain). Interacts with NOV. Interacts with TMEM65. Interacts with ANK3/ANKG and PKP2. Post-translationally, phosphorylation at Ser-325, Ser-328 and Ser-330 by CK1 modulates gap junction assembly. Phosphorylated at Ser-368 by PRKCG; phosphorylation induces disassembly of gap junction plaques and inhibition of gap junction activity. Phosphorylation at Ser-368 by PRKCD triggers its internalization into small vesicles leading to proteasome-mediated degradation. In terms of processing, sumoylated with SUMO1, SUMO2 and SUMO3, which may regulate the level of functional Cx43 gap junctions at the plasma membrane. May be desumoylated by SENP1 or SENP2. S-nitrosylation at Cys-271 is enriched at the muscle endothelial gap junction in arteries, it augments channel permeability and may regulate of smooth muscle cell to endothelial cell communication. Post-translationally, acetylated in the developing cortex; leading to delocalization from the cell membrane.

It localises to the cell membrane. The protein localises to the cell junction. Its subcellular location is the gap junction. The protein resides in the endoplasmic reticulum. In terms of biological role, gap junction protein that acts as a regulator of bladder capacity. A gap junction consists of a cluster of closely packed pairs of transmembrane channels, the connexons, through which materials of low MW diffuse from one cell to a neighboring cell. May play a critical role in the physiology of hearing by participating in the recycling of potassium to the cochlear endolymph. Negative regulator of bladder functional capacity: acts by enhancing intercellular electrical and chemical transmission, thus sensitizing bladder muscles to cholinergic neural stimuli and causing them to contract. May play a role in cell growth inhibition through the regulation of NOV expression and localization. Plays an essential role in gap junction communication in the ventricles. This Erinaceus europaeus (Western European hedgehog) protein is Gap junction alpha-1 protein (GJA1).